The following is a 393-amino-acid chain: Mitogen-activated protein kinase 10 (393 aa).

In terms of domain architecture, Protein kinase spans 60–345 (KPPIRPIGRG…VKEALAHPYL (286 aa)). ATP contacts are provided by residues 66–74 (IGRGACGIV) and Lys89. Catalysis depends on Asp186, which acts as the Proton acceptor. Thr218 is modified (phosphothreonine). Positions 218–220 (TEY) match the TXY motif. A Phosphotyrosine modification is found at Tyr220. Position 223 is a phosphothreonine (Thr223).

It belongs to the protein kinase superfamily. CMGC Ser/Thr protein kinase family. MAP kinase subfamily. In terms of assembly, interacts with MKK2. In terms of processing, dually phosphorylated on Thr-218 and Tyr-220, which activates the enzyme.

It carries out the reaction L-seryl-[protein] + ATP = O-phospho-L-seryl-[protein] + ADP + H(+). It catalyses the reaction L-threonyl-[protein] + ATP = O-phospho-L-threonyl-[protein] + ADP + H(+). Activated by threonine and tyrosine phosphorylation. This is Mitogen-activated protein kinase 10 (MPK10) from Arabidopsis thaliana (Mouse-ear cress).